Consider the following 437-residue polypeptide: Matrix remodeling-associated protein 8 (437 aa).

The N-terminal stretch at 1-22 is a signal peptide; the sequence is MEQLAKLLLWQLLLQQSSVVYL. The Extracellular portion of the chain corresponds to 23 to 339; sequence YSVPADASNP…PESRIHFFQQ (317 aa). 2 consecutive Ig-like V-type domains span residues 32–159 and 167–294; these read PDSV…LDIT and EYWD…VFVT. Asn41, Asn121, Asn246, and Asn304 each carry an N-linked (GlcNAc...) asparagine glycan. Disulfide bonds link Cys54/Cys139 and Cys188/Cys274. The helical transmembrane segment at 340 to 360 threads the bilayer; that stretch reads LGYVLATLLLFVVLLIIVVFI. At 361–437 the chain is on the cytoplasmic side; the sequence is TRKRRQRGYE…DKDFRKEYCK (77 aa).

Homodimer in cis. Does not appear to form trans-homodimers.

Its subcellular location is the cell membrane. In terms of biological role, transmembrane protein which can modulate activity of various signaling pathways, probably via binding to integrin ITGAV:ITGB3. Mediates heterophilic cell-cell interactions in vitro. This chain is Matrix remodeling-associated protein 8 (MXRA8), found in Gallus gallus (Chicken).